Consider the following 109-residue polypeptide: Nucleoid-associated protein Ping_2276 (109 aa).

This sequence belongs to the YbaB/EbfC family. In terms of assembly, homodimer.

The protein localises to the cytoplasm. Its subcellular location is the nucleoid. Binds to DNA and alters its conformation. May be involved in regulation of gene expression, nucleoid organization and DNA protection. The polypeptide is Nucleoid-associated protein Ping_2276 (Psychromonas ingrahamii (strain DSM 17664 / CCUG 51855 / 37)).